The primary structure comprises 329 residues: Ferredoxin--NADP reductase (329 aa).

Positions 28, 36, 41, 81, 115, 282, and 323 each coordinate FAD.

Belongs to the ferredoxin--NADP reductase type 2 family. In terms of assembly, homodimer. FAD is required as a cofactor.

It catalyses the reaction 2 reduced [2Fe-2S]-[ferredoxin] + NADP(+) + H(+) = 2 oxidized [2Fe-2S]-[ferredoxin] + NADPH. The polypeptide is Ferredoxin--NADP reductase (Anaplasma marginale (strain St. Maries)).